A 96-amino-acid chain; its full sequence is NADH-ubiquinone oxidoreductase chain 6 (96 aa).

The next 2 membrane-spanning stretches (helical) occupy residues 24-44 (MSLL…LGSI) and 48-68 (WFAY…FIYV).

It belongs to the complex I subunit 6 family.

It localises to the mitochondrion membrane. It carries out the reaction a ubiquinone + NADH + 5 H(+)(in) = a ubiquinol + NAD(+) + 4 H(+)(out). Functionally, core subunit of the mitochondrial membrane respiratory chain NADH dehydrogenase (Complex I) that is believed to belong to the minimal assembly required for catalysis. Complex I functions in the transfer of electrons from NADH to the respiratory chain. The immediate electron acceptor for the enzyme is believed to be ubiquinone. The polypeptide is NADH-ubiquinone oxidoreductase chain 6 (ND6) (Albinaria turrita (Door snail)).